A 128-amino-acid polypeptide reads, in one-letter code: Phycoerythrin alpha-3 chain, chloroplastic (128 aa).

Residues 1-52 (MFAKTLASLAVIGSAAAYVPMMSMDMGRREVVQAGAAAAAVTPFLSGAPAGA) constitute a chloroplast transit peptide. Residue lysine 56 is modified to 5-hydroxylysine. The interval 70–89 (GCSRAPKESTGGKAGGQDDE) is disordered. Residues cysteine 71, arginine 73, 77 to 78 (ES), and lysine 93 each bind 15,16-dihydrobiliverdin.

This sequence belongs to the phycoerythrin family. As to quaternary structure, heterotetramer of 2 different alpha chains and 2 identical beta chains. The subunit composition could comprise of any combination of 2 out of 4 different alpha units with an invariant beta unit. Contains one covalently linked 15,16-dihydrobiliverdin chromophore.

It localises to the plastid. The protein resides in the chloroplast thylakoid membrane. Light-harvesting photosynthetic tetrapyrrole chromophore-protein from the phycobiliprotein complex. The sequence is that of Phycoerythrin alpha-3 chain, chloroplastic (cpeA3) from Rhodomonas sp. (strain CS 24) (Chroomonas sp. (strain CS24)).